We begin with the raw amino-acid sequence, 311 residues long: tRNA-cytidine(32) 2-sulfurtransferase (311 aa).

Positions 47–52 (SGGKDS) match the PP-loop motif motif. Residues Cys122, Cys125, and Cys213 each coordinate [4Fe-4S] cluster.

It belongs to the TtcA family. Homodimer. The cofactor is Mg(2+). It depends on [4Fe-4S] cluster as a cofactor.

It localises to the cytoplasm. It carries out the reaction cytidine(32) in tRNA + S-sulfanyl-L-cysteinyl-[cysteine desulfurase] + AH2 + ATP = 2-thiocytidine(32) in tRNA + L-cysteinyl-[cysteine desulfurase] + A + AMP + diphosphate + H(+). It participates in tRNA modification. In terms of biological role, catalyzes the ATP-dependent 2-thiolation of cytidine in position 32 of tRNA, to form 2-thiocytidine (s(2)C32). The sulfur atoms are provided by the cysteine/cysteine desulfurase (IscS) system. The chain is tRNA-cytidine(32) 2-sulfurtransferase from Escherichia coli (strain SMS-3-5 / SECEC).